The following is a 476-amino-acid chain: Glycogen synthase (476 aa).

Lys-15 is an ADP-alpha-D-glucose binding site.

This sequence belongs to the glycosyltransferase 1 family. Bacterial/plant glycogen synthase subfamily.

The enzyme catalyses [(1-&gt;4)-alpha-D-glucosyl](n) + ADP-alpha-D-glucose = [(1-&gt;4)-alpha-D-glucosyl](n+1) + ADP + H(+). Its pathway is glycan biosynthesis; glycogen biosynthesis. Synthesizes alpha-1,4-glucan chains using ADP-glucose. This Yersinia enterocolitica serotype O:8 / biotype 1B (strain NCTC 13174 / 8081) protein is Glycogen synthase.